Consider the following 141-residue polypeptide: Hemoglobin subunit alpha (141 aa).

Positions 1–141 (VLSDKDKTNV…VSTVLTSKYR (141 aa)) constitute a Globin domain. The residue at position 3 (Ser3) is a Phosphoserine. Lys7 bears the N6-succinyllysine mark. Thr8 carries the post-translational modification Phosphothreonine. At Lys11 the chain carries N6-succinyllysine. N6-acetyllysine; alternate is present on Lys16. Position 16 is an N6-succinyllysine; alternate (Lys16). Tyr24 carries the post-translational modification Phosphotyrosine. The residue at position 35 (Ser35) is a Phosphoserine. Lys40 bears the N6-succinyllysine mark. Residue Ser49 is modified to Phosphoserine. His58 provides a ligand contact to O2. His87 contacts heme b. Phosphoserine is present on Ser102. A Phosphothreonine modification is found at Thr108. Position 124 is a phosphoserine (Ser124). Thr134 and Thr137 each carry phosphothreonine. Position 138 is a phosphoserine (Ser138).

It belongs to the globin family. As to quaternary structure, heterotetramer of two alpha chains and two beta chains. In terms of tissue distribution, red blood cells.

Its function is as follows. Involved in oxygen transport from the lung to the various peripheral tissues. Hemopressin acts as an antagonist peptide of the cannabinoid receptor CNR1. Hemopressin-binding efficiently blocks cannabinoid receptor CNR1 and subsequent signaling. The sequence is that of Hemoglobin subunit alpha (HBA) from Elephas maximus (Indian elephant).